The following is a 194-amino-acid chain: MGYYDIDDVLADGTEFPCKFQYDIPGLGYLENNPGRPITKNTKLSLPLWLARILAIVGGDEALVDEEPVPFVELLPPDMFSTKVMNAIKTDPVALDLHSINSHFFSLAIKWIMLFSEKELANVVSELLLQRAQELNHHASSLSIDLNADSTGKNSANTNIATSTFLLKLEEMEKEIYKKSHESYKDTKRWMFKK.

It belongs to the GINS3/PSF3 family. In terms of assembly, component of the GINS complex which is a heterotetramer of SLD5, PSF1, PSF2 and PSF3.

The protein resides in the nucleus. Its function is as follows. Functions as part of the GINS complex which plays an essential role in the initiation of DNA replication by binding to DNA replication origins and facilitating the assembly of the DNA replication machinery. The protein is DNA replication complex GINS protein PSF3 of Saccharomyces cerevisiae (strain ATCC 204508 / S288c) (Baker's yeast).